We begin with the raw amino-acid sequence, 580 residues long: PTS system fructose-specific EIIB'BC component (580 aa).

2 consecutive PTS EIIB type-2 domains span residues 1-99 (MSSS…QLAA) and 120-215 (IVAI…KALA). The active-site Phosphocysteine intermediate; for EIIB activity is the cysteine 126. Phosphocysteine; by EIIA is present on cysteine 126. Residues 243-580 (AYKHLMTGVS…LKKPVADVIA (338 aa)) enclose the PTS EIIC type-2 domain. 9 helical membrane-spanning segments follow: residues 254 to 274 (MLPF…LGGI), 289 to 309 (LFQI…AGYI), 332 to 352 (LNAG…GVAA), 369 to 389 (VLIL…YVFG), 410 to 430 (SALL…GGPV), 451 to 471 (AAAM…TWVF), 483 to 503 (ATAA…PYAA), 509 to 529 (TIPA…TAGA), and 549 to 571 (HLLN…LRLL).

The protein localises to the cell inner membrane. It carries out the reaction D-fructose(out) + N(pros)-phospho-L-histidyl-[protein] = D-fructose 1-phosphate(in) + L-histidyl-[protein]. Its function is as follows. The phosphoenolpyruvate-dependent sugar phosphotransferase system (sugar PTS), a major carbohydrate active transport system, catalyzes the phosphorylation of incoming sugar substrates concomitantly with their translocation across the cell membrane. The enzyme II FruAB PTS system is involved in fructose transport. The protein is PTS system fructose-specific EIIB'BC component of Xanthomonas campestris pv. campestris (strain ATCC 33913 / DSM 3586 / NCPPB 528 / LMG 568 / P 25).